A 314-amino-acid polypeptide reads, in one-letter code: Protein SPOROCYTELESS (314 aa).

Residues 1–17 are compositionally biased toward polar residues; sequence MATSLFFMSTDQNSVGN. 2 disordered regions span residues 1–20 and 33–62; these read MATS…NPND and GEIR…PTLR. The SPL signature appears at 62-70; that stretch reads RGMGVAKLE. An EAR motif is present at residues 308 to 314; the sequence is IDLSLKL.

It belongs to the NOZZLE family. In terms of assembly, homodimer and heterodimer with SPEARs. Interacts in vitro with YAB1, YAB3 and YAB4. Interacts (via EAR motif) with TPL, TPR1, TPR2, TPR3 and TPR4. Interacts with SPEAR1, SPEAR2, SPEAR3, SPEAR4, TCP1, TCP6, TCP8, TCP9, TCP11, TCP15, TCP20, TCP21 and TCP23. Interacts with TCP2, TCP3, TCP4, TCP5, TCP10, TCP13, TCP17 and TCP24. In terms of tissue distribution, expressed in flower buds. Not found in leaves, siliques and stems. Detected in rosette leaves, stem tissue and seedlings.

It is found in the nucleus. Functionally, transcriptional regulator of sporocyte development. Acts as an adapter-like transcriptional repressor recruiting TPL/TPR corepressors to inhibit TCP transcription factors. Required for nucellus and embryo sac development. Plays a central role in patterning both the proximal-distal and the adaxial-abaxial axes during ovule development. Involved in establishing the prospective chalaza of the ovule and in controlling the cell number and the length of the funiculus, and is required for the development of the integuments. Required, with BEL1, for cytokinin-induced PIN1 expression in ovules. Involved in controlling stamen identity. May also regulate the morphology of lateral organs by repressing auxin production. This Arabidopsis thaliana (Mouse-ear cress) protein is Protein SPOROCYTELESS.